Reading from the N-terminus, the 229-residue chain is Putative N-acetylmannosamine-6-phosphate 2-epimerase (229 aa).

This sequence belongs to the NanE family.

It carries out the reaction an N-acyl-D-glucosamine 6-phosphate = an N-acyl-D-mannosamine 6-phosphate. It functions in the pathway amino-sugar metabolism; N-acetylneuraminate degradation; D-fructose 6-phosphate from N-acetylneuraminate: step 3/5. Functionally, converts N-acetylmannosamine-6-phosphate (ManNAc-6-P) to N-acetylglucosamine-6-phosphate (GlcNAc-6-P). This Actinobacillus pleuropneumoniae serotype 3 (strain JL03) protein is Putative N-acetylmannosamine-6-phosphate 2-epimerase.